Here is a 386-residue protein sequence, read N- to C-terminus: Succinate--CoA ligase [ADP-forming] subunit beta (386 aa).

The region spanning 9–237 is the ATP-grasp domain; the sequence is KEVLRDFGVN…LSAEHPLEVE (229 aa). ATP is bound by residues Lys-45, 52–54, Val-94, and Glu-101; that span reads GRG. The Mg(2+) site is built by Asn-192 and Asp-206. Residues Asn-258 and 315–317 each bind substrate; that span reads GIT.

This sequence belongs to the succinate/malate CoA ligase beta subunit family. Heterotetramer of two alpha and two beta subunits. It depends on Mg(2+) as a cofactor.

The catalysed reaction is succinate + ATP + CoA = succinyl-CoA + ADP + phosphate. It carries out the reaction GTP + succinate + CoA = succinyl-CoA + GDP + phosphate. The protein operates within carbohydrate metabolism; tricarboxylic acid cycle; succinate from succinyl-CoA (ligase route): step 1/1. Its function is as follows. Succinyl-CoA synthetase functions in the citric acid cycle (TCA), coupling the hydrolysis of succinyl-CoA to the synthesis of either ATP or GTP and thus represents the only step of substrate-level phosphorylation in the TCA. The beta subunit provides nucleotide specificity of the enzyme and binds the substrate succinate, while the binding sites for coenzyme A and phosphate are found in the alpha subunit. The polypeptide is Succinate--CoA ligase [ADP-forming] subunit beta (Deinococcus radiodurans (strain ATCC 13939 / DSM 20539 / JCM 16871 / CCUG 27074 / LMG 4051 / NBRC 15346 / NCIMB 9279 / VKM B-1422 / R1)).